The following is a 172-amino-acid chain: MSAQVSLELHHRISQFLFHEASLLDDWKFRDWLAQLDEEICYTMRTTVNAQTRDRRKGVQPPTTWIFNDTKDQLERRIARLETGMAWAEEPPSRTRHLISNCQISETDIPNVFAVRVNYLLYRAQKERDETFYVGTRFDKVRRLEDDNWRLLERDIVLDQAVITSHNLSVLF.

Belongs to the bacterial ring-hydroxylating dioxygenase beta subunit family. As to quaternary structure, this dioxygenase system consists of four proteins: the two subunits of the hydroxylase component (HcaE and HcaF), a ferredoxin (HcaC) and a ferredoxin reductase (HcaD).

It carries out the reaction 3-phenylpropanoate + NADH + O2 + H(+) = 3-(cis-5,6-dihydroxycyclohexa-1,3-dien-1-yl)propanoate + NAD(+). The enzyme catalyses (E)-cinnamate + NADH + O2 + H(+) = (2E)-3-(cis-5,6-dihydroxycyclohexa-1,3-dien-1-yl)prop-2-enoate + NAD(+). Its pathway is aromatic compound metabolism; 3-phenylpropanoate degradation. Its function is as follows. Part of the multicomponent 3-phenylpropionate dioxygenase. Converts 3-phenylpropionic acid (PP) and cinnamic acid (CI) into 3-phenylpropionate-dihydrodiol (PP-dihydrodiol) and cinnamic acid-dihydrodiol (CI-dihydrodiol), respectively. This chain is 3-phenylpropionate/cinnamic acid dioxygenase subunit beta, found in Escherichia coli O157:H7.